Reading from the N-terminus, the 311-residue chain is tRNA-cytidine(32) 2-sulfurtransferase (311 aa).

The PP-loop motif signature appears at 47 to 52 (SGGKDS). [4Fe-4S] cluster-binding residues include Cys-122, Cys-125, and Cys-213.

Belongs to the TtcA family. As to quaternary structure, homodimer. Mg(2+) is required as a cofactor. The cofactor is [4Fe-4S] cluster.

The protein localises to the cytoplasm. The enzyme catalyses cytidine(32) in tRNA + S-sulfanyl-L-cysteinyl-[cysteine desulfurase] + AH2 + ATP = 2-thiocytidine(32) in tRNA + L-cysteinyl-[cysteine desulfurase] + A + AMP + diphosphate + H(+). The protein operates within tRNA modification. In terms of biological role, catalyzes the ATP-dependent 2-thiolation of cytidine in position 32 of tRNA, to form 2-thiocytidine (s(2)C32). The sulfur atoms are provided by the cysteine/cysteine desulfurase (IscS) system. The polypeptide is tRNA-cytidine(32) 2-sulfurtransferase (Shigella dysenteriae serotype 1 (strain Sd197)).